The chain runs to 450 residues: Tubulin alpha chain, testis-specific (450 aa).

The MREC motif motif lies at 1–4 (MREC). Residue glutamine 11 coordinates GTP. Lysine 40 bears the N6-acetyllysine mark. GTP contacts are provided by glutamate 71, serine 140, glycine 144, threonine 145, threonine 179, asparagine 206, and asparagine 228. A Mg(2+)-binding site is contributed by glutamate 71. The active site involves glutamate 254.

It belongs to the tubulin family. As to quaternary structure, dimer of alpha and beta chains. A typical microtubule is a hollow water-filled tube with an outer diameter of 25 nm and an inner diameter of 15 nM. Alpha-beta heterodimers associate head-to-tail to form protofilaments running lengthwise along the microtubule wall with the beta-tubulin subunit facing the microtubule plus end conferring a structural polarity. Microtubules usually have 13 protofilaments but different protofilament numbers can be found in some organisms and specialized cells. Requires Mg(2+) as cofactor. Some glutamate residues at the C-terminus are polyglycylated, resulting in polyglycine chains on the gamma-carboxyl group. Glycylation is mainly limited to tubulin incorporated into axonemes (cilia and flagella) whereas glutamylation is prevalent in neuronal cells, centrioles, axonemes, and the mitotic spindle. Both modifications can coexist on the same protein on adjacent residues, and lowering polyglycylation levels increases polyglutamylation, and reciprocally. The precise function of polyglycylation is still unclear. Post-translationally, some glutamate residues at the C-terminus are polyglutamylated, resulting in polyglutamate chains on the gamma-carboxyl group. Polyglutamylation plays a key role in microtubule severing by spastin (SPAST). SPAST preferentially recognizes and acts on microtubules decorated with short polyglutamate tails: severing activity by SPAST increases as the number of glutamates per tubulin rises from one to eight, but decreases beyond this glutamylation threshold. In terms of processing, acetylation of alpha chains at Lys-40 is located inside the microtubule lumen. This modification has been correlated with increased microtubule stability, intracellular transport and ciliary assembly. Undergoes a tyrosination/detyrosination cycle, the cyclic removal and re-addition of a C-terminal tyrosine residue by the enzymes tubulin tyrosine carboxypeptidase (MATCAP, VASH1 or VASH2) and tubulin tyrosine ligase (TTL), respectively. Post-translationally, tyrosination promotes microtubule interaction with CAP-Gly microtubule plus-end tracking proteins. Tyrosinated tubulins regulate the initiation of dynein-driven motility. In terms of processing, detyrosination is involved in metaphase plate congression by guiding chromosomes during mitosis. Detyrosination increases microtubules-dependent mechanotransduction in dystrophic cardiac and skeletal muscle. In cardiomyocytes, detyrosinated microtubules are required to resist to contractile compression during contraction. Testis specific.

The protein resides in the cytoplasm. Its subcellular location is the cytoskeleton. The catalysed reaction is GTP + H2O = GDP + phosphate + H(+). In terms of biological role, tubulin is the major constituent of microtubules, a cylinder consisting of laterally associated linear protofilaments composed of alpha- and beta-tubulin heterodimers. Microtubules grow by the addition of GTP-tubulin dimers to the microtubule end, where a stabilizing cap forms. Below the cap, tubulin dimers are in GDP-bound state, owing to GTPase activity of alpha-tubulin. This is Tubulin alpha chain, testis-specific from Oncorhynchus mykiss (Rainbow trout).